We begin with the raw amino-acid sequence, 412 residues long: DnaJ homolog subfamily A member 2 (412 aa).

The J domain maps to 8–70; that stretch reads KLYDILGVPP…EKRELYDRYG (63 aa). K39 carries the N6-acetyllysine modification. Phosphoserine is present on residues S78 and S123. A CR-type zinc finger spans residues 130–214; sequence GKTTKLQLSK…CEGKKVIKEV (85 aa). A Glycyl lysine isopeptide (Lys-Gly) (interchain with G-Cter in SUMO2) cross-link involves residue K134. C143 and C146 together coordinate Zn(2+). The CXXCXGXG motif repeat unit spans residues 143 to 150; it reads CSACSGQG. An N6-acetyllysine modification is found at K152. Zn(2+) is bound by residues C159, C162, C186, C189, C202, and C205. 3 CXXCXGXG motif repeats span residues 159–166, 186–193, and 202–209; these read CSACRGRG, CSDCNGEG, and CKKCEGKK. The segment at 365–412 is disordered; it reads IGETEEVELQEFDSTRGSGGGQRREAYNDSSDEESSSHHGPGVQCAHQ. Position 391 is a phosphotyrosine (Y391). S394 and S395 each carry phosphoserine. C409 is subject to Cysteine methyl ester. The S-farnesyl cysteine moiety is linked to residue C409. Residues 410-412 constitute a propeptide, removed in mature form; that stretch reads AHQ.

The protein localises to the membrane. In terms of biological role, co-chaperone of Hsc70. Stimulates ATP hydrolysis and the folding of unfolded proteins mediated by HSPA1A/B (in vitro). The sequence is that of DnaJ homolog subfamily A member 2 (Dnaja2) from Mus musculus (Mouse).